Reading from the N-terminus, the 662-residue chain is UvrABC system protein B (662 aa).

One can recognise a Helicase ATP-binding domain in the interval 25-182 (KGIEKREKFQ…KKLVEIQYER (158 aa)). An ATP-binding site is contributed by 38–45 (GVTGSGKT). A Beta-hairpin motif is present at residues 91 to 114 (YYDYYQPEAYVAQSDTYIEKDASI). One can recognise a Helicase C-terminal domain in the interval 429 to 595 (QIDDLYTSIQ…TIIKDIREVI (167 aa)). The UVR domain occupies 622–657 (DKLIEKYEEEMKEAAQNLQFEKAAHLRDVIYKLKKD).

This sequence belongs to the UvrB family. As to quaternary structure, forms a heterotetramer with UvrA during the search for lesions. Interacts with UvrC in an incision complex.

Its subcellular location is the cytoplasm. Functionally, the UvrABC repair system catalyzes the recognition and processing of DNA lesions. A damage recognition complex composed of 2 UvrA and 2 UvrB subunits scans DNA for abnormalities. Upon binding of the UvrA(2)B(2) complex to a putative damaged site, the DNA wraps around one UvrB monomer. DNA wrap is dependent on ATP binding by UvrB and probably causes local melting of the DNA helix, facilitating insertion of UvrB beta-hairpin between the DNA strands. Then UvrB probes one DNA strand for the presence of a lesion. If a lesion is found the UvrA subunits dissociate and the UvrB-DNA preincision complex is formed. This complex is subsequently bound by UvrC and the second UvrB is released. If no lesion is found, the DNA wraps around the other UvrB subunit that will check the other stand for damage. In Clostridium botulinum (strain Kyoto / Type A2), this protein is UvrABC system protein B.